The following is a 642-amino-acid chain: Threonine--tRNA ligase (642 aa).

In terms of domain architecture, TGS spans 1-61 (MPVITLPDGS…ETDVDLAIIT (61 aa)). The interval 243–534 (DHRKIGKQLD…LIEEYAGKFP (292 aa)) is catalytic. Zn(2+) contacts are provided by Cys334, His385, and His511.

It belongs to the class-II aminoacyl-tRNA synthetase family. Homodimer. The cofactor is Zn(2+).

It localises to the cytoplasm. It carries out the reaction tRNA(Thr) + L-threonine + ATP = L-threonyl-tRNA(Thr) + AMP + diphosphate + H(+). Functionally, catalyzes the attachment of threonine to tRNA(Thr) in a two-step reaction: L-threonine is first activated by ATP to form Thr-AMP and then transferred to the acceptor end of tRNA(Thr). Also edits incorrectly charged L-seryl-tRNA(Thr). This Shewanella loihica (strain ATCC BAA-1088 / PV-4) protein is Threonine--tRNA ligase.